A 64-amino-acid polypeptide reads, in one-letter code: Large ribosomal subunit protein bL35 (64 aa).

The disordered stretch occupies residues 1–41 (MPKMKSHSGASKRFKVSGKGKLLRQQANRRHLLEHKPSRRT).

Belongs to the bacterial ribosomal protein bL35 family.

The sequence is that of Large ribosomal subunit protein bL35 from Nocardia farcinica (strain IFM 10152).